We begin with the raw amino-acid sequence, 308 residues long: Extended-spectrum beta-lactamase PER-1 (308 aa).

The first 26 residues, Met-1–Ala-26, serve as a signal peptide directing secretion. Ser-71 serves as the catalytic Nucleophile; acyl-ester intermediate. Residues Lys-74, Ser-135, and Glu-171 each coordinate a beta-lactam.

The protein belongs to the class-A beta-lactamase family. Monomer.

Its subcellular location is the secreted. It catalyses the reaction a beta-lactam + H2O = a substituted beta-amino acid. With respect to regulation, inhibited by the beta-lactamase-blocking agents clavulanic acid, tazobactam and sulbactam. Not inhibited by EDTA. Its function is as follows. Extended-spectrum beta-lactamase (ESBL) which confers resistance to penicillins, as well as first-, second- and third-generation cephalosporins, but not the carbapenem, imipenem, in the JM109 strain of E.coli. Has cefotaxime-hydrolyzing activity. The sequence is that of Extended-spectrum beta-lactamase PER-1 from Pseudomonas aeruginosa.